Here is a 386-residue protein sequence, read N- to C-terminus: MADMNQHPTVFQKAANQLDLRSSLSQDVHARYGGVQPAIYQRHFAYGNYSNAGLQRGQATQDLSLITSNASPVFVQAPQEKGFAAFATDFLMGGVSAAVSKTAAAPIERVKLLIQNQDEMLKAGRLSEPYKGIGECFGRTIKEEGFGSLWRGNTANVIRYFPTQALNFAFKDYFKRLFNFKKDRDGYWKWFAGNLASGGAAGASSLFFVYSLDYARTRLANDRKASKKGGERQFNGLVDVYKKTLKSDGIAGLYRGFNISCVGIIVYRGLYFGMYDSLKPVLLTGNLQDSFFASFGLGWLITNGAGLASYPIDTVRRRMMMTSGEAVKYKSSLDAFSQIVKNEGPKSLFKGAGANILRAVAGAGVLAGYDKLQVLVLGKKFGSGGA.

A mitochondrion-targeting transit peptide spans 1–77 (MADMNQHPTV…SNASPVFVQA (77 aa)). Solcar repeat units lie at residues 84–177 (AAFA…FKRL), 189–281 (KWFA…LKPV), and 289–375 (DSFF…LQVL). A run of 5 helical transmembrane segments spans residues 86 to 113 (FATD…VKLL), 154 to 178 (TANV…KRLF), 187 to 207 (YWKW…SSLF), 257 to 278 (FNIS…YDSL), and 292 to 312 (FASF…SYPI). Positions 159 and 171 each coordinate ADP. Residue Arg316 participates in ADP binding. The tract at residues 316-321 (RRRMMM) is important for transport activity. The Nucleotide carrier signature motif motif lies at 316-321 (RRRMMM). A helical transmembrane segment spans residues 352-372 (AGANILRAVAGAGVLAGYDKL).

This sequence belongs to the mitochondrial carrier (TC 2.A.29) family. In terms of assembly, monomer.

It localises to the mitochondrion inner membrane. It carries out the reaction ADP(in) + ATP(out) = ADP(out) + ATP(in). The matrix-open state (m-state) is inhibited by the membrane-permeable bongkrekic acid (BKA). The cytoplasmic-open state (c-state) is inhibited by the membrane-impermeable toxic inhibitor carboxyatractyloside (CATR). Functionally, ADP:ATP antiporter that mediates import of ADP into the mitochondrial matrix for ATP synthesis, and export of ATP out to fuel the cell. Cycles between the cytoplasmic-open state (c-state) and the matrix-open state (m-state): operates by the alternating access mechanism with a single substrate-binding site intermittently exposed to either the cytosolic (c-state) or matrix (m-state) side of the inner mitochondrial membrane. The chain is ADP,ATP carrier protein, mitochondrial (ANT) from Solanum tuberosum (Potato).